We begin with the raw amino-acid sequence, 565 residues long: NAD-dependent malic enzyme (565 aa).

Tyrosine 104 serves as the catalytic Proton donor. Residue arginine 157 coordinates NAD(+). Residue lysine 175 is the Proton acceptor of the active site. A divalent metal cation contacts are provided by glutamate 246, aspartate 247, and aspartate 270. NAD(+)-binding residues include aspartate 270 and asparagine 418.

This sequence belongs to the malic enzymes family. As to quaternary structure, homotetramer. Requires Mg(2+) as cofactor. It depends on Mn(2+) as a cofactor.

The catalysed reaction is (S)-malate + NAD(+) = pyruvate + CO2 + NADH. It carries out the reaction oxaloacetate + H(+) = pyruvate + CO2. The polypeptide is NAD-dependent malic enzyme (Erwinia tasmaniensis (strain DSM 17950 / CFBP 7177 / CIP 109463 / NCPPB 4357 / Et1/99)).